A 777-amino-acid chain; its full sequence is Glucocorticoid receptor (777 aa).

Over residues Met1–Asn14 the composition is skewed to basic and acidic residues. The tract at residues Met1–Glu22 is disordered. Positions Met1–Leu420 are modulating. Thr8 carries the post-translational modification Phosphothreonine. Arg23 carries the omega-N-methylarginine modification. Residues Ser45, Ser113, Ser134, and Ser141 each carry the phosphoserine modification. The disordered stretch occupies residues Asn130–Leu183. Low complexity predominate over residues Ser134–Ala150. The span at Pro151–Val163 shows a compositional bias: basic and acidic residues. Over residues Ser164 to Thr174 the composition is skewed to polar residues. A phosphoserine mark is found at Ser203, Ser211, and Ser226. Lys258 is covalently cross-linked (Glycyl lysine isopeptide (Lys-Gly) (interchain with G-Cter in SUMO2)). Ser267 is modified (phosphoserine). Residues Lys277 and Lys293 each participate in a glycyl lysine isopeptide (Lys-Gly) (interchain with G-Cter in SUMO); alternate cross-link. Residues Lys277 and Lys293 each participate in a glycyl lysine isopeptide (Lys-Gly) (interchain with G-Cter in SUMO2); alternate cross-link. Residues Ser394–Thr414 are compositionally biased toward low complexity. The interval Ser394–Gly415 is disordered. Ser404 is modified (phosphoserine). Residue Lys419 forms a Glycyl lysine isopeptide (Lys-Gly) (interchain with G-Cter in ubiquitin) linkage. NR C4-type zinc fingers lie at residues Cys421–Cys441 and Cys457–Cys481. Residues Cys421–Met486 constitute a DNA-binding region (nuclear receptor). Residues Lys480, Lys492, Lys494, and Lys495 each carry the N6-acetyllysine modification. Residues Gly485–Lys777 are interaction with CLOCK. Positions Asn487 to Ala523 are hinge. The 235-residue stretch at Thr524 to Thr758 folds into the NR LBD domain. The tract at residues Leu532–Leu697 is interaction with CRY1. A Glycyl lysine isopeptide (Lys-Gly) (interchain with G-Cter in SUMO) cross-link involves residue Lys703.

Belongs to the nuclear hormone receptor family. NR3 subfamily. As to quaternary structure, heteromultimeric cytoplasmic complex with HSP90AA1, HSPA1A/HSPA1B, and FKBP5 or another immunophilin such as PPID, STIP1, or the immunophilin homolog PPP5C. Upon ligand binding FKBP5 dissociates from the complex and FKBP4 takes its place, thereby linking the complex to dynein and mediating transport to the nucleus, where the complex dissociates. Probably forms a complex composed of chaperones HSP90 and HSP70, co-chaperones CDC37, PPP5C, TSC1 and client protein TSC2, CDK4, AKT, RAF1 and NR3C1; this complex does not contain co-chaperones STIP1/HOP and PTGES3/p23. Directly interacts with UNC45A. Binds to DNA as a homodimer, and as heterodimer with NR3C2 or the retinoid X receptor. Binds STAT5A and STAT5B homodimers and heterodimers. Interacts with NRIP1, POU2F1, POU2F2 and TRIM28. Interacts with several coactivator complexes, including the SMARCA4 complex, CREBBP/EP300, TADA2L (Ada complex) and p160 coactivators such as NCOA2 and NCOA6. Interaction with BAG1 inhibits transactivation. Interacts with HEXIM1 and TGFB1I1. Interacts with NCOA1. Interacts with NCOA3, SMARCA4, SMARCC1, SMARCD1, and SMARCE1. Interacts with CLOCK, CRY1 and CRY2 in a ligand-dependent fashion. Interacts with CIART. Interacts with RWDD3. Interacts with UBE2I/UBC9 and this interaction is enhanced in the presence of RWDD3. Interacts with GRIP1. Interacts with NR4A3 (via nuclear receptor DNA-binding domain), represses transcription activity of NR4A3 on the POMC promoter Nur response element (NurRE). Directly interacts with PNRC2 to attract and form a complex with UPF1 and DCP1A; the interaction leads to rapid mRNA degradation. Interacts with GSK3B. Interacts with FNIP1 and FNIP2. Interacts (via C-terminus) with HNRNPU (via C-terminus). Interacts with MCM3AP. Interacts (via domain NR LBD) with HSP90AA1 and HSP90AB1. In the absence of hormonal ligand, interacts with TACC1. Interacts (via NR LBD domain) with ZNF764 (via KRAB domain); the interaction regulates transcription factor activity of NR3C1 by directing its actions toward certain biologic pathways. Post-translationally, acetylation by CLOCK reduces its binding to glucocorticoid response elements and its transcriptional activity. Increased proteasome-mediated degradation in response to glucocorticoids. In terms of processing, phosphorylated in the absence of hormone; becomes hyperphosphorylated in the presence of glucocorticoid. The Ser-203, Ser-226 and Ser-404-phosphorylated forms are mainly cytoplasmic, and the Ser-211-phosphorylated form is nuclear. Phosphorylation at Ser-211 increases transcriptional activity. Phosphorylation at Ser-203, Ser-226 and Ser-404 decreases signaling capacity. Phosphorylation at Ser-404 may protect from glucocorticoid-induced apoptosis. Phosphorylation at Ser-203 and Ser-211 is not required in regulation of chromosome segregation. May be dephosphorylated by PPP5C, attenuates NR3C1 action. Post-translationally, ubiquitinated by UBR5, leading to its degradation: UBR5 specifically recognizes and binds ligand-bound NR3C1 when it is not associated with coactivators (NCOAs). In presence of NCOAs, the UBR5-degron is not accessible, preventing its ubiquitination and degradation. Sumoylation at Lys-277 and Lys-293 negatively regulates its transcriptional activity. Sumoylation at Lys-703 positively regulates its transcriptional activity in the presence of RWDD3. Sumoylation at Lys-277 and Lys-293 is dispensable whereas sumoylation at Lys-703 is critical for the stimulatory effect of RWDD3 on its transcriptional activity. Heat shock increases sumoylation in a RWDD3-dependent manner.

Its subcellular location is the cytoplasm. The protein resides in the nucleus. It localises to the mitochondrion. It is found in the cytoskeleton. The protein localises to the spindle. Its subcellular location is the microtubule organizing center. The protein resides in the centrosome. It localises to the chromosome. It is found in the nucleoplasm. In terms of biological role, receptor for glucocorticoids (GC). Has a dual mode of action: as a transcription factor that binds to glucocorticoid response elements (GRE), both for nuclear and mitochondrial DNA, and as a modulator of other transcription factors. Affects inflammatory responses, cellular proliferation and differentiation in target tissues. Involved in chromatin remodeling. Plays a role in rapid mRNA degradation by binding to the 5' UTR of target mRNAs and interacting with PNRC2 in a ligand-dependent manner which recruits the RNA helicase UPF1 and the mRNA-decapping enzyme DCP1A, leading to RNA decay. Could act as a coactivator for STAT5-dependent transcription upon growth hormone (GH) stimulation and could reveal an essential role of hepatic GR in the control of body growth. Mediates glucocorticoid-induced apoptosis. Promotes accurate chromosome segregation during mitosis. May act as a tumor suppressor. May play a negative role in adipogenesis through the regulation of lipolytic and antilipogenic gene expression. The sequence is that of Glucocorticoid receptor (NR3C1) from Saguinus oedipus (Cotton-top tamarin).